We begin with the raw amino-acid sequence, 358 residues long: Dynein axonemal assembly factor 10 (358 aa).

6 WD repeats span residues 64–106 (EKSK…SPVY), 116–155 (NAIDGVGGLGIGDGAPEIVTGSRDGTVKVWDSRQKDTPVV), 163–206 (ETKR…LRWE), 208–250 (NIRN…PSKG), 258–298 (AHKS…QRSK), and 320–358 (LSTQPISSLDWSPDKQGLCVCSSFDQSVRVLIVTKLNTV).

In terms of assembly, interacts with PIH1D1; the interaction associates DNAAF10 with the R2TP complex. Interacts with several dynein axonemal assembly factors.

Its subcellular location is the dynein axonemal particle. Functionally, key assembly factor specifically required for the stability of axonemal dynein heavy chains in cytoplasm. This is Dynein axonemal assembly factor 10 (dnaaf10) from Danio rerio (Zebrafish).